Consider the following 319-residue polypeptide: Large ribosomal subunit protein uL29m (319 aa).

The segment at 1–55 (MWKRSFHSQGGPLRARTKFTKPKPKQPVLPKDKIRPPTQLTHHSNNLRITEPIPP) is disordered. The span at 15–24 (ARTKFTKPKP) shows a compositional bias: basic residues. Residues 38–48 (TQLTHHSNNLR) show a composition bias toward polar residues.

The protein belongs to the universal ribosomal protein uL29 family. As to quaternary structure, component of the mitochondrial large ribosomal subunit. Mature mitochondrial ribosomes consist of a small (37S) and a large (54S) subunit. The 37S subunit contains at least 33 different proteins and 1 molecule of RNA (15S). The 54S subunit contains at least 45 different proteins and 1 molecule of RNA (21S).

The protein resides in the mitochondrion. This chain is Large ribosomal subunit protein uL29m (MRPL4), found in Saccharomyces cerevisiae (strain YJM789) (Baker's yeast).